Consider the following 213-residue polypeptide: Protein-L-isoaspartate O-methyltransferase (213 aa).

S58 is an active-site residue.

It belongs to the methyltransferase superfamily. L-isoaspartyl/D-aspartyl protein methyltransferase family.

It is found in the cytoplasm. The enzyme catalyses [protein]-L-isoaspartate + S-adenosyl-L-methionine = [protein]-L-isoaspartate alpha-methyl ester + S-adenosyl-L-homocysteine. Catalyzes the methyl esterification of L-isoaspartyl residues in peptides and proteins that result from spontaneous decomposition of normal L-aspartyl and L-asparaginyl residues. It plays a role in the repair and/or degradation of damaged proteins. This is Protein-L-isoaspartate O-methyltransferase from Chlorobaculum tepidum (strain ATCC 49652 / DSM 12025 / NBRC 103806 / TLS) (Chlorobium tepidum).